We begin with the raw amino-acid sequence, 150 residues long: Endoribonuclease YbeY (150 aa).

Zn(2+) contacts are provided by His116, His120, and His126.

This sequence belongs to the endoribonuclease YbeY family. It depends on Zn(2+) as a cofactor.

It localises to the cytoplasm. Functionally, single strand-specific metallo-endoribonuclease involved in late-stage 70S ribosome quality control and in maturation of the 3' terminus of the 16S rRNA. This chain is Endoribonuclease YbeY, found in Beutenbergia cavernae (strain ATCC BAA-8 / DSM 12333 / CCUG 43141 / JCM 11478 / NBRC 16432 / NCIMB 13614 / HKI 0122).